A 394-amino-acid polypeptide reads, in one-letter code: Elongation factor Tu 1 (394 aa).

The region spanning 10–204 (KPHVNVGTIG…ALDNYIPEPE (195 aa)) is the tr-type G domain. The interval 19–26 (GHVDHGKT) is G1. Residue 19-26 (GHVDHGKT) coordinates GTP. Thr-26 provides a ligand contact to Mg(2+). Residues 60-64 (GITIS) form a G2 region. The tract at residues 81–84 (DCPG) is G3. GTP is bound by residues 81–85 (DCPGH) and 136–139 (NKCD). A G4 region spans residues 136–139 (NKCD). The interval 174 to 176 (SAL) is G5.

The protein belongs to the TRAFAC class translation factor GTPase superfamily. Classic translation factor GTPase family. EF-Tu/EF-1A subfamily. Monomer.

The protein resides in the cytoplasm. It carries out the reaction GTP + H2O = GDP + phosphate + H(+). Its function is as follows. GTP hydrolase that promotes the GTP-dependent binding of aminoacyl-tRNA to the A-site of ribosomes during protein biosynthesis. The sequence is that of Elongation factor Tu 1 from Photobacterium profundum (strain SS9).